We begin with the raw amino-acid sequence, 423 residues long: Tumor necrosis factor receptor superfamily member 19 (423 aa).

Residues 1 to 29 (MALKVLLEQEKTFFTLLVLLGYLSCKVTC) form the signal peptide. Residues 30–170 (ESGDCRQQEF…TASSPRDTAL (141 aa)) are Extracellular-facing. TNFR-Cys repeat units lie at residues 33 to 72 (DCRQ…DAQC), 74 to 114 (TCRL…DAIC), and 116 to 149 (DCLP…EPHC). 8 disulfide bridges follow: Cys-34/Cys-46, Cys-49/Cys-62, Cys-52/Cys-72, Cys-75/Cys-89, Cys-92/Cys-106, Cys-95/Cys-114, Cys-117/Cys-135, and Cys-138/Cys-149. N-linked (GlcNAc...) asparagine glycosylation occurs at Asn-105. The chain crosses the membrane as a helical span at residues 171–191 (AAVICSALATVLLALLILCVI). Residues 192–423 (YCKRQFMEKK…LQVRQRLGSL (232 aa)) are Cytoplasmic-facing.

Associates with TRAF1, TRAF2, TRAF3 and TRAF5. Interacts with LINGO1. Highly expressed in prostate. Detected at lower levels in thymus, spleen, testis, uterus, small intestine, colon and peripheral blood leukocytes.

Its subcellular location is the membrane. Its function is as follows. Can mediate activation of JNK and NF-kappa-B. May promote caspase-independent cell death. This Homo sapiens (Human) protein is Tumor necrosis factor receptor superfamily member 19 (TNFRSF19).